Reading from the N-terminus, the 591-residue chain is Reduced folate transporter (591 aa).

M1 carries the N-acetylmethionine modification. Residues 1 to 29 (MVPSSPAVEKQVPVEPGPDPELRSWRHLV) lie on the Cytoplasmic side of the membrane. At S5 the chain carries Phosphoserine. A helical membrane pass occupies residues 30–50 (CYLCFYGFMAQIRPGESFITP). Positions 48 and 49 each coordinate folate. The Extracellular portion of the chain corresponds to 51–64 (YLLGPDKNFTREQV). N-linked (GlcNAc...) asparagine glycosylation occurs at N58. The chain crosses the membrane as a helical span at residues 65–87 (TNEITPVLSYSYLAVLVPVFLLT). At 88–91 (DYLR) the chain is on the cytoplasmic side. Residues 92 to 112 (YTPVLLLQGLSFVSVWLLLLL) traverse the membrane as a helical segment. The Extracellular segment spans residues 113 to 116 (GHSV). Residues 117–139 (AHMQLMELFYSVTMAARIAYSSY) form a helical membrane-spanning segment. Residues E123 and R133 each contribute to the folate site. 2',3'-cGAMP-binding residues include R133, I134, S137, Y149, and R157. The Cytoplasmic portion of the chain corresponds to 140–153 (IFSLVRPARYQRVA). A helical transmembrane segment spans residues 154–178 (GYSRAAVLLGVFTSSVLGQLLVTVG). V164 contacts folate. The Extracellular segment spans residues 179–183 (RVSFS). A helical membrane pass occupies residues 184 to 202 (TLNYISLAFLTFSVVLALF). The Cytoplasmic portion of the chain corresponds to 203–266 (LKRPKRSLFF…ELGDSLRRPQ (64 aa)). S225 bears the Phosphoserine mark. A helical membrane pass occupies residues 267 to 292 (LRLWSLWWVFNSAGYYLVVYYVHILW). Positions 281, 282, and 286 each coordinate folate. Residue Y282 participates in 2',3'-cGAMP binding. Over 293 to 304 (NEVDPTTNSARV) the chain is Extracellular. The helical transmembrane segment at 305–327 (YNGAADAASTLLGAITSFAAGFV) threads the bilayer. S321 is a binding site for 2',3'-cGAMP. Residues 328–333 (KIRWAR) lie on the Cytoplasmic side of the membrane. A helical membrane pass occupies residues 334–354 (WSKLLIAGVTATQAGLVFLLA). At 355-360 (HTRHPS) the chain is on the extracellular side. Residues 361-384 (SIWLCYAAFVLFRGSYQFLVPIAT) form a helical membrane-spanning segment. 2 residues coordinate folate: R373 and Q377. 2',3'-cGAMP is bound by residues Q377, P381, T384, K393, C396, and F400. At 385–398 (FQIASSLSKELCAL) the chain is on the cytoplasmic side. Residues 399–422 (VFGVNTFFATIVKTIITFIVSDVR) form a helical membrane-spanning segment. The segment at 407 to 419 (ATIVKTIITFIVS) is required for substrate-binding. Residues 423 to 430 (GLGLPVRK) lie on the Extracellular side of the membrane. A helical membrane pass occupies residues 431-455 (QFQLYSVYFLILSIIYFLGAMLDGL). Over 456-591 (RHCQRGHHPR…PSDGVQNVNQ (136 aa)) the chain is Cytoplasmic. Phosphoserine occurs at positions 474, 485, 499, and 503.

It belongs to the reduced folate carrier (RFC) transporter (TC 2.A.48) family. In terms of tissue distribution, placenta, liver, and to a much smaller extent, in lung.

The protein resides in the cell membrane. It is found in the apical cell membrane. Its subcellular location is the basolateral cell membrane. The catalysed reaction is 5-amino-1-(5-phospho-beta-D-ribosyl)imidazole-4-carboxamide(in) + (6S)-5-methyl-5,6,7,8-tetrahydrofolate(out) = 5-amino-1-(5-phospho-beta-D-ribosyl)imidazole-4-carboxamide(out) + (6S)-5-methyl-5,6,7,8-tetrahydrofolate(in). The enzyme catalyses 2',3'-cGAMP(out) + 5-amino-1-(5-phospho-beta-D-ribosyl)imidazole-4-carboxamide(in) = 2',3'-cGAMP(in) + 5-amino-1-(5-phospho-beta-D-ribosyl)imidazole-4-carboxamide(out). It catalyses the reaction 3',3'-cGAMP(out) + 5-amino-1-(5-phospho-beta-D-ribosyl)imidazole-4-carboxamide(in) = 3',3'-cGAMP(in) + 5-amino-1-(5-phospho-beta-D-ribosyl)imidazole-4-carboxamide(out). In terms of biological role, antiporter that mediates the import of reduced folates or a subset of cyclic dinucleotides, driven by the export of organic anions. Acts as an importer of immunoreactive cyclic dinucleotides, such as cyclic GMP-AMP (2'-3'-cGAMP), an immune messenger produced in response to DNA virus in the cytosol, and its linkage isomer 3'-3'-cGAMP, thus playing a role in triggering larger immune responses. Mechanistically, acts as a secondary active transporter, which exports intracellular organic anions down their concentration gradients to facilitate the uptake of its substrates. Has high affinity for N5-methyltetrahydrofolate, the predominant circulating form of folate. Also mediates the import of antifolate drug methotrexate. 5-amino-4-imidazolecarboxamide riboside (AICAR), when phosphorylated to AICAR monophosphate, can serve as an organic anion for antiporter activity. In Homo sapiens (Human), this protein is Reduced folate transporter.